Reading from the N-terminus, the 278-residue chain is Large ribosomal subunit protein uL2 (278 aa).

The segment at 223-278 is disordered; sequence RGSAMNPNDHPHGGGEGKAPVGRKAPMTPWGKKALGVKTRNKKKASTKLIVRRRTK. A compositionally biased stretch (basic residues) spans 261–278; sequence TRNKKKASTKLIVRRRTK.

This sequence belongs to the universal ribosomal protein uL2 family. In terms of assembly, part of the 50S ribosomal subunit. Forms a bridge to the 30S subunit in the 70S ribosome.

Functionally, one of the primary rRNA binding proteins. Required for association of the 30S and 50S subunits to form the 70S ribosome, for tRNA binding and peptide bond formation. It has been suggested to have peptidyltransferase activity; this is somewhat controversial. Makes several contacts with the 16S rRNA in the 70S ribosome. The protein is Large ribosomal subunit protein uL2 of Spiroplasma kunkelii.